Consider the following 349-residue polypeptide: MLDLSLPSGLRDLLPDHSAHLAELSSKLHDVFSRFGYRRVFLPTLERLDVVERGLSPAALADVMKFVEPGSGEVVAIRPDITPQIARLYAARPDALPSPARLCYDGPVLRAREARAGRPREVYQAGVELLGAGGASADAEALVLLARSLERVGLKAPRVEVGHARFAEAVMEAARLPERLRSAAWEALSRKDRAALAAAAAKGRGSAEAREAVPQLAGLFGDGALDRARAIARAVPEAAAPLAETEAALRIARRRGVREVAVDLGEARGLGYYTGITFAGYAPGAGAAVARGGRYDGLLARFGRPGPAIGFAVDLEFATQALERVNGRGRGVRPRRASARGGRARARPR.

The tract at residues 327–349 (GRGRGVRPRRASARGGRARARPR) is disordered. Over residues 330 to 349 (RGVRPRRASARGGRARARPR) the composition is skewed to basic residues.

The protein belongs to the class-II aminoacyl-tRNA synthetase family. HisZ subfamily. Heteromultimer composed of HisG and HisZ subunits.

It is found in the cytoplasm. It participates in amino-acid biosynthesis; L-histidine biosynthesis; L-histidine from 5-phospho-alpha-D-ribose 1-diphosphate: step 1/9. Required for the first step of histidine biosynthesis. May allow the feedback regulation of ATP phosphoribosyltransferase activity by histidine. This Anaeromyxobacter sp. (strain K) protein is ATP phosphoribosyltransferase regulatory subunit.